The following is a 36-amino-acid chain: Cytochrome b6-f complex subunit 5 (36 aa).

The chain crosses the membrane as a helical span at residues Leu-5–Ala-25.

It belongs to the PetG family. As to quaternary structure, the 4 large subunits of the cytochrome b6-f complex are cytochrome b6, subunit IV (17 kDa polypeptide, PetD), cytochrome f and the Rieske protein, while the 4 small subunits are PetG, PetL, PetM and PetN. The complex functions as a dimer.

It is found in the cellular thylakoid membrane. Its function is as follows. Component of the cytochrome b6-f complex, which mediates electron transfer between photosystem II (PSII) and photosystem I (PSI), cyclic electron flow around PSI, and state transitions. PetG is required for either the stability or assembly of the cytochrome b6-f complex. The chain is Cytochrome b6-f complex subunit 5 from Acaryochloris marina (strain MBIC 11017).